The following is a 914-amino-acid chain: TRPM8 channel-associated factor 3 (914 aa).

The Peptidase M60 domain occupies 533–832; sequence NSWVSTGLYL…TYLQLQEGFG (300 aa).

Belongs to the TCAF family.

May play a role in the regulation of the cation channel TRPM8 activity. This is TRPM8 channel-associated factor 3 from Rattus norvegicus (Rat).